We begin with the raw amino-acid sequence, 296 residues long: 4-hydroxybenzoate octaprenyltransferase (296 aa).

A run of 8 helical transmembrane segments spans residues 23-43 (IGIL…SPGW), 46-66 (GLVL…GCVM), 99-119 (LALA…PLVV), 141-161 (IPQA…FAAI), 163-183 (GQLP…AIAY), 211-231 (DVFA…WVGV), 237-257 (WPYF…YALI), and 265-285 (CFKA…GVLA).

It belongs to the UbiA prenyltransferase family. Mg(2+) serves as cofactor.

Its subcellular location is the cell inner membrane. The catalysed reaction is all-trans-octaprenyl diphosphate + 4-hydroxybenzoate = 4-hydroxy-3-(all-trans-octaprenyl)benzoate + diphosphate. Its pathway is cofactor biosynthesis; ubiquinone biosynthesis. In terms of biological role, catalyzes the prenylation of para-hydroxybenzoate (PHB) with an all-trans polyprenyl group. Mediates the second step in the final reaction sequence of ubiquinone-8 (UQ-8) biosynthesis, which is the condensation of the polyisoprenoid side chain with PHB, generating the first membrane-bound Q intermediate 3-octaprenyl-4-hydroxybenzoate. This is 4-hydroxybenzoate octaprenyltransferase from Methylobacillus flagellatus (strain ATCC 51484 / DSM 6875 / VKM B-1610 / KT).